Consider the following 827-residue polypeptide: ADP-ribosylation factor GTPase-activating protein AGD3 (827 aa).

The 225-residue stretch at 1–225 (MHFTKLDDSP…INQVLTYAQQ (225 aa)) folds into the BAR domain. Coiled-coil stretches lie at residues 116 to 139 (HEVK…REKF) and 223 to 253 (AQQS…RESR). Residues 246-269 (RQVDRESRWGSNGSNGSPNGDGIQ) form a disordered region. A compositionally biased stretch (low complexity) spans 255-267 (GSNGSNGSPNGDG). The region spanning 292–430 (QTIRQGYLSK…WIEKITGVIA (139 aa)) is the PH domain. Residues 439 to 467 (EQRLPGSPMGSGHHRSASESSSYESSEYD) form a disordered region. Ser445 is subject to Phosphoserine. The Arf-GAP domain occupies 501–643 (EKPIDALRKV…LFVRRSRDSD (143 aa)). Residues 516–539 (CADCGAPEPDWASLNLGVLVCIEC) form a C4-type zinc finger. ANK repeat units follow at residues 728–757 (GGSS…NVNA), 761–790 (SGQT…DPEA), and 794–825 (EGKT…YNHR).

As to quaternary structure, homodimer. Interacts with DRP1A. Interacts with VAB. Broadly expressed. Detected in developing veins of the leaf and root. Detected in roots, hypocotyls, cotyledons, leaves, siliques and shoot apical meristems.

The protein localises to the golgi apparatus. The protein resides in the trans-Golgi network. With respect to regulation, ARF GAP activity strongly enhanced by phosphatidylinositol 4-monophosphate (PIP) and moderately enhanced by phosphatidylinositol 4,5-bisphosphate (PIP2). In terms of biological role, GTPase-activating protein (GAP) for ADP ribosylation factor (ARF). Involved in the spatial control of provascular differentiation. Required for the formation of the normal pattern of continuous secondary veins. Involved in auxin signaling but not in polar auxin transport or in auxin responses. Required for PIN1 internalization in roots. The sequence is that of ADP-ribosylation factor GTPase-activating protein AGD3 (AGD3) from Arabidopsis thaliana (Mouse-ear cress).